A 145-amino-acid polypeptide reads, in one-letter code: UPF0179 protein MmarC6_0993 (145 aa).

It belongs to the UPF0179 family.

The polypeptide is UPF0179 protein MmarC6_0993 (Methanococcus maripaludis (strain C6 / ATCC BAA-1332)).